The primary structure comprises 332 residues: GTPase Obg (332 aa).

Positions 1–159 (MKFLDQAKIY…RWVWLRLKLI (159 aa)) constitute an Obg domain. One can recognise an OBG-type G domain in the interval 160–328 (ADAGLVGLPN…VLRETLRMIR (169 aa)). GTP is bound by residues 166 to 173 (GLPNAGKS), 191 to 195 (FTTLH), 213 to 216 (DIPG), 280 to 283 (NKMD), and 309 to 311 (SAA). Residues S173 and T193 each contribute to the Mg(2+) site.

Belongs to the TRAFAC class OBG-HflX-like GTPase superfamily. OBG GTPase family. Monomer. Mg(2+) serves as cofactor.

Its subcellular location is the cytoplasm. An essential GTPase which binds GTP, GDP and possibly (p)ppGpp with moderate affinity, with high nucleotide exchange rates and a fairly low GTP hydrolysis rate. Plays a role in control of the cell cycle, stress response, ribosome biogenesis and in those bacteria that undergo differentiation, in morphogenesis control. The chain is GTPase Obg from Acidiphilium cryptum (strain JF-5).